Reading from the N-terminus, the 225-residue chain is tRNA (guanine-N(1)-)-methyltransferase (225 aa).

Residues glycine 112 and 132–137 each bind S-adenosyl-L-methionine; that span reads IGDYVL.

Belongs to the RNA methyltransferase TrmD family. Homodimer.

The protein localises to the cytoplasm. The catalysed reaction is guanosine(37) in tRNA + S-adenosyl-L-methionine = N(1)-methylguanosine(37) in tRNA + S-adenosyl-L-homocysteine + H(+). Its function is as follows. Specifically methylates guanosine-37 in various tRNAs. This is tRNA (guanine-N(1)-)-methyltransferase from Bacteroides fragilis (strain ATCC 25285 / DSM 2151 / CCUG 4856 / JCM 11019 / LMG 10263 / NCTC 9343 / Onslow / VPI 2553 / EN-2).